The primary structure comprises 107 residues: uncharacterized protein (107 aa).

Over residues 1–14 (MTERNASGRMNTKG) the composition is skewed to polar residues. The interval 1-20 (MTERNASGRMNTKGRSIKET) is disordered.

Its subcellular location is the mitochondrion. This is an uncharacterized protein from Arabidopsis thaliana (Mouse-ear cress).